The sequence spans 425 residues: Transmembrane protein 184A (425 aa).

The next 7 helical transmembrane spans lie at 51–71, 96–116, 133–153, 189–209, 226–246, 261–281, and 303–323; these read LFLT…TALL, LLFI…LLGG, FVIY…SAIM, TLQF…LQAF, VTLV…LFYF, FLTI…LAIL, and LAAG…SLAL. A disordered region spans residues 375–425; that stretch reads QYTQQSTHEAPGPGQGGHPSPSTHPGPASGSGGGKKSRNIEKRMLIPSEDL. The span at 392 to 402 shows a compositional bias: low complexity; sequence HPSPSTHPGPA.

Belongs to the TMEM184 family. As to expression, expressed in vascular cells (at protein level).

Its subcellular location is the cell membrane. The protein localises to the cytoplasm. It localises to the perinuclear region. It is found in the early endosome membrane. The protein resides in the endosome. Its subcellular location is the cytoplasmic vesicle. The protein localises to the secretory vesicle membrane. It localises to the cytoplasmic vesicle membrane. Acts as a heparin receptor in vascular cells. May be involved in vesicle transport in exocrine cells and Sertoli cells. This is Transmembrane protein 184A (Tmem184a) from Rattus norvegicus (Rat).